Reading from the N-terminus, the 451-residue chain is Tubulin alpha chain (451 aa).

Glutamine 11 provides a ligand contact to GTP. Lysine 40 carries the post-translational modification N6-acetyllysine. 7 residues coordinate GTP: glutamate 71, serine 140, glycine 144, threonine 145, threonine 179, asparagine 206, and asparagine 228. Glutamate 71 is a binding site for Mg(2+). Glutamate 254 is a catalytic residue.

It belongs to the tubulin family. In terms of assembly, dimer of alpha and beta chains. A typical microtubule is a hollow water-filled tube with an outer diameter of 25 nm and an inner diameter of 15 nM. Alpha-beta heterodimers associate head-to-tail to form protofilaments running lengthwise along the microtubule wall with the beta-tubulin subunit facing the microtubule plus end conferring a structural polarity. Microtubules usually have 13 protofilaments but different protofilament numbers can be found in some organisms and specialized cells. The cofactor is Mg(2+). In terms of processing, undergoes a tyrosination/detyrosination cycle, the cyclic removal and re-addition of a C-terminal tyrosine residue by the enzymes tubulin tyrosine carboxypeptidase (TTCP) and tubulin tyrosine ligase (TTL), respectively. Post-translationally, acetylation of alpha chains at Lys-40 stabilizes microtubules and affects affinity and processivity of microtubule motors. This modification has a role in multiple cellular functions, ranging from cell motility, cell cycle progression or cell differentiation to intracellular trafficking and signaling. As to expression, actively expressed in the lens but does not seem to be lens-specific.

Its subcellular location is the cytoplasm. The protein resides in the cytoskeleton. It catalyses the reaction GTP + H2O = GDP + phosphate + H(+). In terms of biological role, tubulin is the major constituent of microtubules, a cylinder consisting of laterally associated linear protofilaments composed of alpha- and beta-tubulin heterodimers. Microtubules grow by the addition of GTP-tubulin dimers to the microtubule end, where a stabilizing cap forms. Below the cap, tubulin dimers are in GDP-bound state, owing to GTPase activity of alpha-tubulin. This Enteroctopus dofleini (North Pacific giant octopus) protein is Tubulin alpha chain.